The chain runs to 517 residues: GMP synthase [glutamine-hydrolyzing] (517 aa).

Residues 9–202 (KIIVLDYGSQ…AFNVCKAKGD (194 aa)) enclose the Glutamine amidotransferase type-1 domain. Residue Cys86 is the Nucleophile of the active site. Catalysis depends on residues His176 and Glu178. Residues 203-392 (WSMDSFIDME…LGMPDEIVWR (190 aa)) form the GMPS ATP-PPase domain. 230–236 (SGGVDSS) is an ATP binding site.

Homodimer.

It catalyses the reaction XMP + L-glutamine + ATP + H2O = GMP + L-glutamate + AMP + diphosphate + 2 H(+). It functions in the pathway purine metabolism; GMP biosynthesis; GMP from XMP (L-Gln route): step 1/1. Catalyzes the synthesis of GMP from XMP. This chain is GMP synthase [glutamine-hydrolyzing], found in Streptococcus mutans serotype c (strain ATCC 700610 / UA159).